Reading from the N-terminus, the 327-residue chain is Glycerol-3-phosphate dehydrogenase [NAD(P)+] (327 aa).

3 residues coordinate NADPH: tryptophan 11, histidine 30, and lysine 103. Sn-glycerol 3-phosphate-binding residues include lysine 103, glycine 131, and serine 133. Alanine 135 provides a ligand contact to NADPH. Lysine 186, aspartate 243, serine 253, arginine 254, and asparagine 255 together coordinate sn-glycerol 3-phosphate. Lysine 186 functions as the Proton acceptor in the catalytic mechanism. NADPH is bound at residue arginine 254. Valine 281 and glutamate 283 together coordinate NADPH.

Belongs to the NAD-dependent glycerol-3-phosphate dehydrogenase family.

Its subcellular location is the cytoplasm. The enzyme catalyses sn-glycerol 3-phosphate + NAD(+) = dihydroxyacetone phosphate + NADH + H(+). It catalyses the reaction sn-glycerol 3-phosphate + NADP(+) = dihydroxyacetone phosphate + NADPH + H(+). It participates in membrane lipid metabolism; glycerophospholipid metabolism. Its function is as follows. Catalyzes the reduction of the glycolytic intermediate dihydroxyacetone phosphate (DHAP) to sn-glycerol 3-phosphate (G3P), the key precursor for phospholipid synthesis. The protein is Glycerol-3-phosphate dehydrogenase [NAD(P)+] of Wolbachia pipientis wMel.